A 542-amino-acid polypeptide reads, in one-letter code: MESQRNILLIGLLFVSFLLWQQWQTDKNPQPVATESSVVASTVTDAHSADVPDADAALPEAVAASKELISVTTDQLTLKINPVGGDIVYSALVGHKLEQDKEEPFVLLQQTKDIYYISQSGLIGRNGIDSSTKGRAHFSSQSQAYTLADGQDTLEIPLTYVADNGVTYTKVFTLHRGKFDVGVEYRINNTSAEQLQVQMYGQIKHSIKKSESSMMMPTYRGAAFSTADTRYEKYSFEDMADKNLDKKTLGGWAAMLQHYFVSAWVPPANDQNTIFSSVSAGGLANIGFRGAVYDVAPGTQQTISAQFYVGPKDQEALSAISESLNLVVDYGFLWWLAIPIHWLLMFYQSFVGNWGVAIILITLTVRGMLYPLTKAQYTSMAKMRNLQPKLQDMKERFGDDRQKMGQAMMELYKKEKVNPMGGCLPILLQMPIFIALYWVLLESYELRHAPFMLWITDLSVQDPYYVLPLLMGVSMFLMQKMQPMAPTMDPMQQKMMQWMPVIFTVFFLWFPAGLVLYWLVGNLVAITQQKIIYAGLEKKGLK.

The next 6 membrane-spanning stretches (helical) occupy residues 6 to 26 (NILL…WQTD), 326 to 346 (LVVD…LLMF), 350 to 370 (FVGN…GMLY), 421 to 441 (GGCL…WVLL), 458 to 478 (LSVQ…MFLM), and 501 to 521 (VIFT…WLVG).

Belongs to the OXA1/ALB3/YidC family. Type 1 subfamily. Interacts with the Sec translocase complex via SecD. Specifically interacts with transmembrane segments of nascent integral membrane proteins during membrane integration.

The protein localises to the cell inner membrane. In terms of biological role, required for the insertion and/or proper folding and/or complex formation of integral membrane proteins into the membrane. Involved in integration of membrane proteins that insert both dependently and independently of the Sec translocase complex, as well as at least some lipoproteins. Aids folding of multispanning membrane proteins. The chain is Membrane protein insertase YidC from Shewanella loihica (strain ATCC BAA-1088 / PV-4).